The sequence spans 75 residues: UPF0352 protein plu2871 (75 aa).

Belongs to the UPF0352 family.

The polypeptide is UPF0352 protein plu2871 (Photorhabdus laumondii subsp. laumondii (strain DSM 15139 / CIP 105565 / TT01) (Photorhabdus luminescens subsp. laumondii)).